Reading from the N-terminus, the 166-residue chain is Probable glucosamine 6-phosphate N-acetyltransferase 2 (166 aa).

The 146-residue stretch at 21-166 folds into the N-acetyltransferase domain; it reads VQIRRLEATD…EKGVQMAIYF (146 aa). Residues Ser-43, 93 to 96, and 105 to 107 each bind substrate; these read KFLR and EDV. Position 115–120 (115–120) interacts with acetyl-CoA; that stretch reads GRGLGL. 136-137 is a binding site for substrate; the sequence is YK. 150–152 lines the acetyl-CoA pocket; it reads YAK.

This sequence belongs to the acetyltransferase family. GNA1 subfamily. As to quaternary structure, homodimer.

The protein localises to the endoplasmic reticulum membrane. It carries out the reaction D-glucosamine 6-phosphate + acetyl-CoA = N-acetyl-D-glucosamine 6-phosphate + CoA + H(+). Its pathway is nucleotide-sugar biosynthesis; UDP-N-acetyl-alpha-D-glucosamine biosynthesis; N-acetyl-alpha-D-glucosamine 1-phosphate from alpha-D-glucosamine 6-phosphate (route I): step 1/2. Its function is as follows. Acetyltransferase involved in UDP-N-acetylglucosamine (UDP-GlcNAc) biosynthesis. UDP-GlcNAc is an essential metabolite that serves as an initial sugar donor of N-glycan synthesis and thus plays an important role in protein and lipid glycosylation. This chain is Probable glucosamine 6-phosphate N-acetyltransferase 2, found in Oryza sativa subsp. japonica (Rice).